The chain runs to 173 residues: MSRFMIRAVFFRRYTAATVGKPFRNVAEVKQYLAKQTWSIDEILHGEDTGKAAKQGVPTEEEVRKLLALCAFPVEDADLQNSKRILVKQLSFINKLHETSVDDQDKNLDENYARLLPRQNKALTYDDLLKKIDGIKQDEATGEPTGSWDSTGLAKMRKDNYFIVRQGLLKNRK.

Residues Met-1–Thr-15 constitute a mitochondrion transit peptide.

It belongs to the GatF family. As to quaternary structure, subunit of the heterotrimeric GatFAB amidotransferase (AdT) complex, composed of A, B and F subunits.

It localises to the mitochondrion inner membrane. It carries out the reaction L-glutamyl-tRNA(Gln) + L-glutamine + ATP + H2O = L-glutaminyl-tRNA(Gln) + L-glutamate + ADP + phosphate + H(+). Functionally, allows the formation of correctly charged Gln-tRNA(Gln) through the transamidation of misacylated Glu-tRNA(Gln) in the mitochondria. The reaction takes place in the presence of glutamine and ATP through an activated gamma-phospho-Glu-tRNA(Gln). Required for proper protein synthesis within the mitochondrion. This chain is Glutamyl-tRNA(Gln) amidotransferase subunit F, mitochondrial, found in Candida glabrata (strain ATCC 2001 / BCRC 20586 / JCM 3761 / NBRC 0622 / NRRL Y-65 / CBS 138) (Yeast).